The chain runs to 197 residues: Probable GTP-binding protein EngB (197 aa).

The EngB-type G domain maps to lysine 22–phenylalanine 195. GTP contacts are provided by residues glycine 30 to serine 37, glycine 57 to leucine 61, aspartate 75 to glycine 78, threonine 142 to aspartate 145, and phenylalanine 174 to serine 176. Residues serine 37 and threonine 59 each contribute to the Mg(2+) site.

This sequence belongs to the TRAFAC class TrmE-Era-EngA-EngB-Septin-like GTPase superfamily. EngB GTPase family. Mg(2+) is required as a cofactor.

Necessary for normal cell division and for the maintenance of normal septation. The chain is Probable GTP-binding protein EngB from Clostridium kluyveri (strain ATCC 8527 / DSM 555 / NBRC 12016 / NCIMB 10680 / K1).